The primary structure comprises 217 residues: MSSVAVIDYGMGNLHSIAKALQHADANAAVTVTSDPDVILASDRVVFPGVGAMRDCMAHLAERRLEQVVRRAAAEKPFLGICLGMQALLEESEENGGTRCLGLITGRVLRFPEGLTGAAGEPLKIPHMGWNRVHFSDPSHPLWAGIPAESWFYFVHSYYAAPADPADVAATSDYPTPFAAAVARGKVFAVQFHPEKSQAAGLRLLANFLRWEPWSSR.

Residues 3–217 form the Glutamine amidotransferase type-1 domain; it reads SVAVIDYGMG…FLRWEPWSSR (215 aa). Residue Cys82 is the Nucleophile of the active site. Active-site residues include His193 and Glu195.

Heterodimer of HisH and HisF.

It is found in the cytoplasm. It carries out the reaction 5-[(5-phospho-1-deoxy-D-ribulos-1-ylimino)methylamino]-1-(5-phospho-beta-D-ribosyl)imidazole-4-carboxamide + L-glutamine = D-erythro-1-(imidazol-4-yl)glycerol 3-phosphate + 5-amino-1-(5-phospho-beta-D-ribosyl)imidazole-4-carboxamide + L-glutamate + H(+). It catalyses the reaction L-glutamine + H2O = L-glutamate + NH4(+). The protein operates within amino-acid biosynthesis; L-histidine biosynthesis; L-histidine from 5-phospho-alpha-D-ribose 1-diphosphate: step 5/9. In terms of biological role, IGPS catalyzes the conversion of PRFAR and glutamine to IGP, AICAR and glutamate. The HisH subunit catalyzes the hydrolysis of glutamine to glutamate and ammonia as part of the synthesis of IGP and AICAR. The resulting ammonia molecule is channeled to the active site of HisF. The sequence is that of Imidazole glycerol phosphate synthase subunit HisH from Methylococcus capsulatus (strain ATCC 33009 / NCIMB 11132 / Bath).